The following is a 426-amino-acid chain: 3-phosphoshikimate 1-carboxyvinyltransferase (426 aa).

3-phosphoshikimate-binding residues include lysine 20, serine 21, and arginine 25. Lysine 20 lines the phosphoenolpyruvate pocket. Residues glycine 92 and arginine 120 each coordinate phosphoenolpyruvate. Residues serine 165, glutamine 167, aspartate 313, and lysine 340 each coordinate 3-phosphoshikimate. Glutamine 167 serves as a coordination point for phosphoenolpyruvate. Aspartate 313 serves as the catalytic Proton acceptor. 2 residues coordinate phosphoenolpyruvate: arginine 344 and arginine 386.

Belongs to the EPSP synthase family. As to quaternary structure, monomer.

The protein localises to the cytoplasm. The catalysed reaction is 3-phosphoshikimate + phosphoenolpyruvate = 5-O-(1-carboxyvinyl)-3-phosphoshikimate + phosphate. It participates in metabolic intermediate biosynthesis; chorismate biosynthesis; chorismate from D-erythrose 4-phosphate and phosphoenolpyruvate: step 6/7. Catalyzes the transfer of the enolpyruvyl moiety of phosphoenolpyruvate (PEP) to the 5-hydroxyl of shikimate-3-phosphate (S3P) to produce enolpyruvyl shikimate-3-phosphate and inorganic phosphate. This chain is 3-phosphoshikimate 1-carboxyvinyltransferase, found in Brevibacillus brevis (strain 47 / JCM 6285 / NBRC 100599).